A 192-amino-acid chain; its full sequence is Potassium-transporting ATPase KdpC subunit (192 aa).

A helical transmembrane segment spans residues 14–34 (LTGVLVVLCGLIYPAMVTGIA).

It belongs to the KdpC family. In terms of assembly, the system is composed of three essential subunits: KdpA, KdpB and KdpC.

The protein resides in the cell membrane. Functionally, part of the high-affinity ATP-driven potassium transport (or Kdp) system, which catalyzes the hydrolysis of ATP coupled with the electrogenic transport of potassium into the cytoplasm. This subunit acts as a catalytic chaperone that increases the ATP-binding affinity of the ATP-hydrolyzing subunit KdpB by the formation of a transient KdpB/KdpC/ATP ternary complex. The protein is Potassium-transporting ATPase KdpC subunit of Bacillus cytotoxicus (strain DSM 22905 / CIP 110041 / 391-98 / NVH 391-98).